The primary structure comprises 306 residues: MGMSSRTNPKVAVLMGGPSAEREVSLVSGRECAAALRGEGFEVVELDAGSDLCDRLRASAPDVVFNALHGRWGEDGCVQGLLEWLRIPYTSSGVLASALAMDKERSKEAYRAAGLPVAASQLADRAAIEAAHVMQPPYVVKPYNEGSSVGVYIVTEAANGPPVLAPDLPATLMVEEYVPGRELSTTVLGDRALNVTDIITDGWYDYHAKYSPGGSRHVIPADLPPEIFELCLDYALRAHKALGCRGLSRTDFRWDESRGAAGLFLLETNTQPGMTPTSLAPEQALAAGMSFGQLCAWMVEDASCDR.

Residues 107 to 300 form the ATP-grasp domain; the sequence is KEAYRAAGLP…FGQLCAWMVE (194 aa). 134 to 184 contributes to the ATP binding site; that stretch reads MQPPYVVKPYNEGSSVGVYIVTEAANGPPVLAPDLPATLMVEEYVPGRELS. Asp-251, Glu-267, and Asn-269 together coordinate Mg(2+).

This sequence belongs to the D-alanine--D-alanine ligase family. Mg(2+) is required as a cofactor. It depends on Mn(2+) as a cofactor.

It localises to the cytoplasm. The catalysed reaction is 2 D-alanine + ATP = D-alanyl-D-alanine + ADP + phosphate + H(+). It participates in cell wall biogenesis; peptidoglycan biosynthesis. Its function is as follows. Cell wall formation. This is D-alanine--D-alanine ligase from Ruegeria pomeroyi (strain ATCC 700808 / DSM 15171 / DSS-3) (Silicibacter pomeroyi).